Consider the following 510-residue polypeptide: Serine carboxypeptidase 1 (510 aa).

The N-terminal stretch at 1–25 (MARRGRRSLASPAVAIALFVFLAYG) is a signal peptide. Positions 26–36 (GGGGGGGVCEA) are excised as a propeptide. Intrachain disulfides connect Cys98-Cys399, Cys262-Cys274, and Cys297-Cys366. Asn154 is a glycosylation site (N-linked (GlcNAc...) asparagine). Ser194 is a catalytic residue. Asn268 carries an N-linked (GlcNAc...) asparagine glycan. Positions 303–362 (IKKVTPANTKLPKSFQHLGTTTKPLAVRTRMHGRAWPLRAPVRAGRVPSWQEFARGSRPS) are cleaved as a propeptide — linker peptide. Asn418 carries an N-linked (GlcNAc...) asparagine glycan. Residues Asp434 and His487 contribute to the active site. Residues 508-510 (SKL) carry the Microbody targeting signal motif.

This sequence belongs to the peptidase S10 family.

It catalyses the reaction Release of a C-terminal amino acid with broad specificity.. This is Serine carboxypeptidase 1 (CBP1) from Oryza sativa subsp. japonica (Rice).